A 400-amino-acid polypeptide reads, in one-letter code: UDP-glucuronate:glycolipid 2-beta-glucuronosyltransferase (400 aa).

The Proton acceptor role is filled by Asp-157. UDP-alpha-D-glucuronate is bound by residues 230–231 (SM), 272–273 (EM), Tyr-292, and 306–310 (MKLLQ). A disordered region spans residues 377-400 (PETRLYPHPPTAAPQLSSEAALSH). Residues 390–400 (PQLSSEAALSH) show a composition bias toward polar residues.

The protein belongs to the glycosyltransferase 70 family.

The protein localises to the cell inner membrane. The catalysed reaction is alpha-D-Man-(1-&gt;3)-beta-D-Glc-(1-&gt;4)-alpha-D-Glc-1-di-trans,octa-cis-undecaprenyl diphosphate + UDP-alpha-D-glucuronate = beta-D-GlcA-(1-&gt;2)-alpha-D-Man-(1-&gt;3)-beta-D-Glc-(1-&gt;4)-alpha-D-Glc-di-trans,octa-cis-undecaprenyl diphosphate + UDP + H(+). Its pathway is glycan biosynthesis; xanthan biosynthesis. Catalyzes the transfer of a glucuronic acid (GlcA) residue from UDP-glucuronate to mannose-alpha-1,3-glucose-beta-1,4-glucose-P-P-polyisoprenyl to form the lipid-linked tetrasaccharide GlcA-Man-Glc(2)-PP-Pol, with a glucuronic acid-beta-mannose linkage. Is involved in the biosynthesis of the exopolysaccharide xanthan, since it catalyzes the fourth glycosylation step in the assembly of the pentasaccharide-P-P-polyisoprenyl repeating unit of xanthan. Is unable to use the trisaccharide acceptor freed from the pyrophosphate lipid moiety. Does not show specificity for the lipidic portion of the acceptor. Shows diminished activity when tested with 6-O-acetyl-mannose-alpha-1,3-glucose-beta-1,4-glucose-P-P-polyisoprenyl, a putative intermediate in the synthesis of xanthan; this could indicate that acetylation of the internal mannose takes place after the formation of the GumK product. The sequence is that of UDP-glucuronate:glycolipid 2-beta-glucuronosyltransferase (gumK) from Xanthomonas campestris pv. campestris.